The chain runs to 223 residues: Twisted gastrulation protein homolog 1 (223 aa).

The signal sequence occupies residues 1–25 (MKLHYVAVLTLAILMFLTWLPASLS). N-linked (GlcNAc...) asparagine glycans are attached at residues asparagine 52 and asparagine 81.

This sequence belongs to the twisted gastrulation protein family. In terms of assembly, interacts with CHRD and BMP4. This interaction enhances CHRD/BMP4 complex formation. Interacts with BMP7.

The protein localises to the secreted. May be involved in dorsoventral axis formation. Seems to antagonize BMP signaling by forming ternary complexes with CHRD and BMPs, thereby preventing BMPs from binding to their receptors. In addition to the anti-BMP function, also has pro-BMP activity, partly mediated by cleavage and degradation of CHRD, which releases BMPs from ternary complexes. May be an important modulator of BMP-regulated cartilage development and chondrocyte differentiation. May play a role in thymocyte development. This chain is Twisted gastrulation protein homolog 1 (TWSG1), found in Pongo abelii (Sumatran orangutan).